The primary structure comprises 163 residues: 6,7-dimethyl-8-ribityllumazine synthase 1 (163 aa).

Residues F27, 58-60, and 87-89 contribute to the 5-amino-6-(D-ribitylamino)uracil site; these read ALE and CVV. 92–93 is a (2S)-2-hydroxy-3-oxobutyl phosphate binding site; that stretch reads ET. H95 functions as the Proton donor in the catalytic mechanism. A 5-amino-6-(D-ribitylamino)uracil-binding site is contributed by N120. Residue R134 participates in (2S)-2-hydroxy-3-oxobutyl phosphate binding.

Belongs to the DMRL synthase family.

The catalysed reaction is (2S)-2-hydroxy-3-oxobutyl phosphate + 5-amino-6-(D-ribitylamino)uracil = 6,7-dimethyl-8-(1-D-ribityl)lumazine + phosphate + 2 H2O + H(+). Its pathway is cofactor biosynthesis; riboflavin biosynthesis; riboflavin from 2-hydroxy-3-oxobutyl phosphate and 5-amino-6-(D-ribitylamino)uracil: step 1/2. Catalyzes the formation of 6,7-dimethyl-8-ribityllumazine by condensation of 5-amino-6-(D-ribitylamino)uracil with 3,4-dihydroxy-2-butanone 4-phosphate. This is the penultimate step in the biosynthesis of riboflavin. This Rhodopseudomonas palustris (strain ATCC BAA-98 / CGA009) protein is 6,7-dimethyl-8-ribityllumazine synthase 1.